The following is a 179-amino-acid chain: Replication restart protein DnaT (179 aa).

Positions 154–179 (SNGGLPKRDVNTVSEPDSQIPPGFRG) are disordered.

The protein belongs to the DnaT family. Homooligomerizes. Interacts with PriB. Component of the replication restart primosome. Primosome assembly occurs via a 'hand-off' mechanism. PriA binds to replication forks, subsequently PriB then DnaT bind; DnaT then displaces ssDNA to generate the helicase loading substrate.

In terms of biological role, involved in the restart of stalled replication forks, which reloads the replicative helicase on sites other than the origin of replication. Can function in multiple replication restart pathways. Displaces ssDNA from a PriB-ssDNA complex. Probably forms a spiral filament on ssDNA. The protein is Replication restart protein DnaT of Escherichia coli O127:H6 (strain E2348/69 / EPEC).